Consider the following 401-residue polypeptide: S-adenosylmethionine synthase 1 (401 aa).

H15 contacts ATP. D17 lines the Mg(2+) pocket. K(+) is bound at residue E43. 2 residues coordinate L-methionine: E56 and Q98. Residues 98–108 (QSPDIAQGVDK) form a flexible loop region. ATP-binding positions include 173–175 (DGK), 246–247 (RF), D255, 261–262 (RK), A278, and K282. Residue D255 participates in L-methionine binding. K286 provides a ligand contact to L-methionine.

The protein belongs to the AdoMet synthase family. In terms of assembly, homotetramer; dimer of dimers. The cofactor is Mg(2+). It depends on K(+) as a cofactor.

The protein resides in the cytoplasm. The catalysed reaction is L-methionine + ATP + H2O = S-adenosyl-L-methionine + phosphate + diphosphate. It participates in amino-acid biosynthesis; S-adenosyl-L-methionine biosynthesis; S-adenosyl-L-methionine from L-methionine: step 1/1. In terms of biological role, catalyzes the formation of S-adenosylmethionine (AdoMet) from methionine and ATP. The overall synthetic reaction is composed of two sequential steps, AdoMet formation and the subsequent tripolyphosphate hydrolysis which occurs prior to release of AdoMet from the enzyme. This chain is S-adenosylmethionine synthase 1, found in Frankia casuarinae (strain DSM 45818 / CECT 9043 / HFP020203 / CcI3).